A 414-amino-acid polypeptide reads, in one-letter code: Probable protein phosphatase 2C 9 (414 aa).

Residues 15–37 traverse the membrane as a helical segment; sequence TATAAVAAAVSASAAAAVSSAID. The disordered stretch occupies residues 56-95; sequence LQAGEDGRPGKRQRLARTASGAPRPDEDSASERPSCGRTE. Residues 99–410 form the PPM-type phosphatase domain; sequence RYGVTAVCGR…DNVSVVVVDL (312 aa). Mn(2+)-binding residues include D136 and G137. Over residues 186–195 the composition is skewed to basic and acidic residues; sequence GNRASTRSDD. The interval 186–212 is disordered; that stretch reads GNRASTRSDDEPACPCEQQTPSRRDHA. Residue D319 participates in Mn(2+) binding. A disordered region spans residues 345 to 372; sequence APAARPSGVPSSAEAAETENGGAASVKG. Positions 355-369 are enriched in low complexity; sequence SSAEAAETENGGAAS. Position 401 (D401) interacts with Mn(2+).

The protein belongs to the PP2C family. Mg(2+) serves as cofactor. Mn(2+) is required as a cofactor.

The protein resides in the membrane. It carries out the reaction O-phospho-L-seryl-[protein] + H2O = L-seryl-[protein] + phosphate. It catalyses the reaction O-phospho-L-threonyl-[protein] + H2O = L-threonyl-[protein] + phosphate. The polypeptide is Probable protein phosphatase 2C 9 (Oryza sativa subsp. japonica (Rice)).